A 332-amino-acid polypeptide reads, in one-letter code: DNA-directed RNA polymerase subunit alpha (332 aa).

The segment at 1-244 is alpha N-terminal domain (alpha-NTD); sequence MKKHAKVYYS…AHLNLLADVE (244 aa). The segment at 259 to 332 is alpha C-terminal domain (alpha-CTD); it reads IKEEPIRRFS…NYKNENKGEN (74 aa).

The protein belongs to the RNA polymerase alpha chain family. In terms of assembly, homodimer. The RNAP catalytic core consists of 2 alpha, 1 beta, 1 beta' and 1 omega subunit. When a sigma factor is associated with the core the holoenzyme is formed, which can initiate transcription.

The catalysed reaction is RNA(n) + a ribonucleoside 5'-triphosphate = RNA(n+1) + diphosphate. Its function is as follows. DNA-dependent RNA polymerase catalyzes the transcription of DNA into RNA using the four ribonucleoside triphosphates as substrates. This is DNA-directed RNA polymerase subunit alpha from Mesomycoplasma hyopneumoniae (strain 232) (Mycoplasma hyopneumoniae).